We begin with the raw amino-acid sequence, 730 residues long: Elongation factor 2 (730 aa).

The region spanning 19–228 (QRIRNIGIVA…TGVSFKDVYD (210 aa)) is the tr-type G domain. GTP is bound by residues 28-35 (AHIDHGKT), 94-98 (DTPGH), and 148-151 (NKVD). A Diphthamide modification is found at H596.

It belongs to the TRAFAC class translation factor GTPase superfamily. Classic translation factor GTPase family. EF-G/EF-2 subfamily.

Its subcellular location is the cytoplasm. In terms of biological role, catalyzes the GTP-dependent ribosomal translocation step during translation elongation. During this step, the ribosome changes from the pre-translocational (PRE) to the post-translocational (POST) state as the newly formed A-site-bound peptidyl-tRNA and P-site-bound deacylated tRNA move to the P and E sites, respectively. Catalyzes the coordinated movement of the two tRNA molecules, the mRNA and conformational changes in the ribosome. The chain is Elongation factor 2 from Methanosarcina acetivorans (strain ATCC 35395 / DSM 2834 / JCM 12185 / C2A).